Reading from the N-terminus, the 143-residue chain is Photosystem II extrinsic protein U (143 aa).

Residues 1 to 29 form the signal peptide; that stretch reads MKRLVGVLMILGLMLTSWGLLGSPQTAIA. Residues 30–44 constitute a propeptide that is removed on maturation; that stretch reads ASLSPLSFNPSPVLA.

The protein belongs to the PsbU family. PSII is composed of 1 copy each of membrane proteins PsbA, PsbB, PsbC, PsbD, PsbE, PsbF, PsbH, PsbI, PsbJ, PsbK, PsbL, PsbM, PsbT, PsbX, PsbY, PsbZ, Psb30/Ycf12, peripheral proteins PsbO, CyanoQ (PsbQ), PsbU, PsbV and a large number of cofactors. It forms dimeric complexes.

Its subcellular location is the cellular thylakoid membrane. In terms of biological role, one of the extrinsic, lumenal subunits of photosystem II (PSII). PSII is a light-driven water plastoquinone oxidoreductase, using light energy to abstract electrons from H(2)O, generating a proton gradient subsequently used for ATP formation. The extrinsic proteins stabilize the structure of photosystem II oxygen-evolving complex (OEC), the ion environment of oxygen evolution and protect the OEC against heat-induced inactivation. The chain is Photosystem II extrinsic protein U from Leptolyngbya laminosa (Phormidium laminosum).